The following is a 215-amino-acid chain: Cytochrome c biogenesis ATP-binding export protein CcmA (215 aa).

The ABC transporter domain occupies 8 to 215; it reads LQATALACER…RDLDLGQWSA (208 aa). 40-47 provides a ligand contact to ATP; sequence GPNGCGKT.

The protein belongs to the ABC transporter superfamily. CcmA exporter (TC 3.A.1.107) family. The complex is composed of two ATP-binding proteins (CcmA) and two transmembrane proteins (CcmB).

The protein resides in the cell inner membrane. It catalyses the reaction heme b(in) + ATP + H2O = heme b(out) + ADP + phosphate + H(+). In terms of biological role, part of the ABC transporter complex CcmAB involved in the biogenesis of c-type cytochromes; once thought to export heme, this seems not to be the case, but its exact role is uncertain. Responsible for energy coupling to the transport system. This chain is Cytochrome c biogenesis ATP-binding export protein CcmA, found in Pseudomonas syringae pv. syringae (strain B728a).